The sequence spans 614 residues: uncharacterized protein (614 aa).

Positions 23–68 (YPIPSHNGDGESEKNSSDSTSSKVNAKVTSSLQGAPSTNDENSVSP) are disordered. Positions 49 to 68 (KVTSSLQGAPSTNDENSVSP) are enriched in polar residues.

This sequence to C.trachomatis CT875.

This is an uncharacterized protein from Chlamydia muridarum (strain MoPn / Nigg).